The following is a 106-amino-acid chain: MGKKCSSKFRQMLVLVLLLIVFTCLSVTAPLSVTAKPTSFKVKARGIEDEGQERTHSLNSKKSSRSVEKTHHSEGRRLSNVFPNAGIRAGPSKSGQGGGRIPVAAS.

The first 26 residues, 1 to 26 (MGKKCSSKFRQMLVLVLLLIVFTCLS), serve as a signal peptide directing secretion. 2 stretches are compositionally biased toward basic and acidic residues: residues 46–56 (GIEDEGQERTH) and 65–77 (RSVEKTHHSEGRR). A disordered region spans residues 46–106 (GIEDEGQERT…GGGRIPVAAS (61 aa)). 2 short sequence motifs (SCOOP motif) span residues 58-72 (LNSKKSSRSVEKTHH) and 86-100 (GIRAGPSKSGQGGGR). Short sequence motifs (sxS motif essential for MIK2 binding) lie at residues 64-66 (SRS) and 92-94 (SKS).

The protein belongs to the serine rich endogenous peptide (SCOOP) phytocytokine family. As to quaternary structure, interacts with MIK2 (via extracellular leucine-rich repeat domain); this interaction triggers the formation of complex between MIK2 and the BAK1/SERK3 and SERK4 coreceptors, and subsequent BAK1 activation by phosphorylation. In terms of tissue distribution, mostly expressed in roots, and, to a lower extent, in seedlings shoots.

Its subcellular location is the cell membrane. It localises to the secreted. The protein localises to the extracellular space. It is found in the apoplast. In terms of biological role, brassicaceae-specific phytocytokine (plant endogenous peptide released into the apoplast) perceived by MIK2 in a BAK1/SERK3 and SERK4 coreceptors-dependent manner, that modulates various physiological and antimicrobial processes including growth prevention and reactive oxygen species (ROS) response regulation. This chain is Serine rich endogenous peptide 7, found in Arabidopsis thaliana (Mouse-ear cress).